The following is a 444-amino-acid chain: 23S rRNA (uracil(1939)-C(5))-methyltransferase RlmD (444 aa).

One can recognise a TRAM domain in the interval 5–64; that stretch reads KPKLNLTSQTARIVNLSHDGRGIARINGKATFIQGALPGEVVEFQYTRVKKDFDEGKLLS. [4Fe-4S] cluster-binding residues include C77, C83, C86, and C166. 6 residues coordinate S-adenosyl-L-methionine: Q276, F305, N310, E326, N353, and D374. Catalysis depends on C400, which acts as the Nucleophile.

The protein belongs to the class I-like SAM-binding methyltransferase superfamily. RNA M5U methyltransferase family. RlmD subfamily.

The enzyme catalyses uridine(1939) in 23S rRNA + S-adenosyl-L-methionine = 5-methyluridine(1939) in 23S rRNA + S-adenosyl-L-homocysteine + H(+). Functionally, catalyzes the formation of 5-methyl-uridine at position 1939 (m5U1939) in 23S rRNA. The sequence is that of 23S rRNA (uracil(1939)-C(5))-methyltransferase RlmD from Legionella pneumophila (strain Lens).